We begin with the raw amino-acid sequence, 413 residues long: Glucose-1-phosphate adenylyltransferase (413 aa).

Alpha-D-glucose 1-phosphate-binding positions include Gly163, 179-180 (EK), and Ser197.

The protein belongs to the bacterial/plant glucose-1-phosphate adenylyltransferase family. Homotetramer.

It carries out the reaction alpha-D-glucose 1-phosphate + ATP + H(+) = ADP-alpha-D-glucose + diphosphate. It participates in glycan biosynthesis; glycogen biosynthesis. In terms of biological role, involved in the biosynthesis of ADP-glucose, a building block required for the elongation reactions to produce glycogen. Catalyzes the reaction between ATP and alpha-D-glucose 1-phosphate (G1P) to produce pyrophosphate and ADP-Glc. This chain is Glucose-1-phosphate adenylyltransferase, found in Parafrankia sp. (strain EAN1pec).